Reading from the N-terminus, the 55-residue chain is Neurotoxin BmKX-A1-S31 (55 aa).

The N-terminal stretch at Met-1 to Gly-23 is a signal peptide. 3 cysteine pairs are disulfide-bonded: Cys-30–Cys-45, Cys-36–Cys-50, and Cys-39–Cys-53.

In terms of tissue distribution, expressed by the venom gland.

It localises to the secreted. This Olivierus martensii (Manchurian scorpion) protein is Neurotoxin BmKX-A1-S31.